The following is a 217-amino-acid chain: Ribosomal RNA small subunit methyltransferase G (217 aa).

S-adenosyl-L-methionine-binding positions include Gly78, Phe83, 129–130 (GE), and Arg146.

This sequence belongs to the methyltransferase superfamily. RNA methyltransferase RsmG family.

It localises to the cytoplasm. It catalyses the reaction guanosine(527) in 16S rRNA + S-adenosyl-L-methionine = N(7)-methylguanosine(527) in 16S rRNA + S-adenosyl-L-homocysteine. Specifically methylates the N7 position of guanine in position 527 of 16S rRNA. This is Ribosomal RNA small subunit methyltransferase G from Geobacter sulfurreducens (strain ATCC 51573 / DSM 12127 / PCA).